Consider the following 255-residue polypeptide: Proteasome subunit alpha (255 aa).

Belongs to the peptidase T1A family. In terms of assembly, the 20S proteasome core is composed of 14 alpha and 14 beta subunits that assemble into four stacked heptameric rings, resulting in a barrel-shaped structure. The two inner rings, each composed of seven catalytic beta subunits, are sandwiched by two outer rings, each composed of seven alpha subunits. The catalytic chamber with the active sites is on the inside of the barrel. Has a gated structure, the ends of the cylinder being occluded by the N-termini of the alpha-subunits. Is capped at one or both ends by the proteasome regulatory ATPase, PAN.

Its subcellular location is the cytoplasm. With respect to regulation, the formation of the proteasomal ATPase PAN-20S proteasome complex, via the docking of the C-termini of PAN into the intersubunit pockets in the alpha-rings, triggers opening of the gate for substrate entry. Interconversion between the open-gate and close-gate conformations leads to a dynamic regulation of the 20S proteasome proteolysis activity. Functionally, component of the proteasome core, a large protease complex with broad specificity involved in protein degradation. In Natronomonas pharaonis (strain ATCC 35678 / DSM 2160 / CIP 103997 / JCM 8858 / NBRC 14720 / NCIMB 2260 / Gabara) (Halobacterium pharaonis), this protein is Proteasome subunit alpha.